The primary structure comprises 522 residues: Amphoterin-induced protein 2 (522 aa).

The N-terminal stretch at 1–39 is a signal peptide; that stretch reads MSLRVHTLPTLLGAVVRPGCRELLCLLMITVAVGPGASG. The 29-residue stretch at 40–68 folds into the LRRNT domain; that stretch reads VCPTACICATDIVSCTNKHLSKVPGNLFR. The Extracellular segment spans residues 40 to 398; sequence VCPTACICAT…RSHAHEAFNT (359 aa). Intrachain disulfides connect C41/C47 and C45/C54. 6 LRR repeats span residues 69–90, 94–115, 118–139, 142–163, 166–187, and 193–214; these read LMKR…WIPV, KLNT…SFST, NLKC…VFQE, VLEV…AFGG, QLQK…LYVG, and ELMF…HINL. N104 carries an N-linked (GlcNAc...) asparagine glycan. Residues 228–284 form the LRRCT domain; the sequence is NPFVCDCSLYSLLVFWYRRHFSSVMDFKNDYTCRLWSDSRHSRQVLLLQDSFMNCSD. Disulfide bonds link C232–C260 and C234–C282. Residues N281, N288, N345, N373, N381, and N384 are each glycosylated (N-linked (GlcNAc...) asparagine). The Ig-like C2-type domain occupies 289 to 379; that stretch reads GSFRALGFIH…RLLNETVDVT (91 aa). A disulfide bridge links C310 with C363. Residues 399-419 traverse the membrane as a helical segment; it reads AFTTLAACVASIVLVLLYLYL. Topologically, residues 420-522 are cytoplasmic; it reads TPCPCKCKTK…FSDTPFVAST (103 aa). Residues 501–522 are disordered; it reads RGKSDSDSVNSVFSDTPFVAST.

Belongs to the immunoglobulin superfamily. AMIGO family. As to quaternary structure, binds itself as well as AMIGO1 and AMIGO3.

It localises to the cell membrane. The protein resides in the nucleus. In terms of biological role, required for depolarization-dependent survival of cultured cerebellar granule neurons. May mediate homophilic as well as heterophilic cell-cell interaction with AMIGO1 or AMIGO3. May contribute to signal transduction through its intracellular domain. The sequence is that of Amphoterin-induced protein 2 from Pongo abelii (Sumatran orangutan).